Reading from the N-terminus, the 78-residue chain is Acyl carrier protein (78 aa).

In terms of domain architecture, Carrier spans Ser-2–Thr-77. Ser-37 bears the O-(pantetheine 4'-phosphoryl)serine mark.

It belongs to the acyl carrier protein (ACP) family. In terms of processing, 4'-phosphopantetheine is transferred from CoA to a specific serine of apo-ACP by AcpS. This modification is essential for activity because fatty acids are bound in thioester linkage to the sulfhydryl of the prosthetic group.

It localises to the cytoplasm. It functions in the pathway lipid metabolism; fatty acid biosynthesis. Functionally, carrier of the growing fatty acid chain in fatty acid biosynthesis. This Chelativorans sp. (strain BNC1) protein is Acyl carrier protein.